Reading from the N-terminus, the 368-residue chain is Peptide chain release factor 2 (368 aa).

Glutamine 250 carries the post-translational modification N5-methylglutamine.

Belongs to the prokaryotic/mitochondrial release factor family. In terms of processing, methylated by PrmC. Methylation increases the termination efficiency of RF2.

The protein resides in the cytoplasm. Peptide chain release factor 2 directs the termination of translation in response to the peptide chain termination codons UGA and UAA. This chain is Peptide chain release factor 2, found in Mycolicibacterium vanbaalenii (strain DSM 7251 / JCM 13017 / BCRC 16820 / KCTC 9966 / NRRL B-24157 / PYR-1) (Mycobacterium vanbaalenii).